A 435-amino-acid chain; its full sequence is Methionine aminopeptidase 2 (435 aa).

The interval 57-77 (AIDGDQAAAKKKKSKKKKKKA) is disordered. A compositionally biased stretch (basic residues) spans 65-77 (AKKKKSKKKKKKA). A substrate-binding site is contributed by H188. D208, D219, and H288 together coordinate a divalent metal cation. A substrate-binding site is contributed by H296. Residues E321 and E416 each coordinate a divalent metal cation.

This sequence belongs to the peptidase M24A family. Methionine aminopeptidase eukaryotic type 2 subfamily. It depends on Co(2+) as a cofactor. Zn(2+) is required as a cofactor. The cofactor is Mn(2+). Requires Fe(2+) as cofactor.

It localises to the cytoplasm. It carries out the reaction Release of N-terminal amino acids, preferentially methionine, from peptides and arylamides.. Cotranslationally removes the N-terminal methionine from nascent proteins. The N-terminal methionine is often cleaved when the second residue in the primary sequence is small and uncharged (Met-Ala-, Cys, Gly, Pro, Ser, Thr, or Val). The chain is Methionine aminopeptidase 2 from Clavispora lusitaniae (strain ATCC 42720) (Yeast).